An 86-amino-acid chain; its full sequence is Exodeoxyribonuclease 7 small subunit (86 aa).

A disordered region spans residues 1–26; sequence MQDELFETEKAPQKNTKNAKNAPKKS.

It belongs to the XseB family. Heterooligomer composed of large and small subunits.

The protein localises to the cytoplasm. The enzyme catalyses Exonucleolytic cleavage in either 5'- to 3'- or 3'- to 5'-direction to yield nucleoside 5'-phosphates.. In terms of biological role, bidirectionally degrades single-stranded DNA into large acid-insoluble oligonucleotides, which are then degraded further into small acid-soluble oligonucleotides. This Helicobacter pylori (strain Shi470) protein is Exodeoxyribonuclease 7 small subunit.